Here is a 595-residue protein sequence, read N- to C-terminus: Leiomodin-1 (595 aa).

3 disordered regions span residues 1–69, 81–322, and 467–568; these read MSKV…EAML, QREM…KVKN, and DKQR…QEKN. Ser-12 carries the post-translational modification Phosphoserine. A compositionally biased stretch (acidic residues) spans 27–40; sequence EEMEELEKELDVVD. 8 stretches are compositionally biased toward basic and acidic residues: residues 81–110, 117–127, 134–192, 200–223, 230–249, 257–287, 467–476, and 484–493; these read QREM…DASR, QDSDLGKEPKK, FSRD…EKTG, SRDK…KLTA, GRRE…KPED, RDWR…KAPE, DKQRQKRLQE, and SGEKKDRLEV. Residue Ser-85 is modified to Phosphoserine. At Ser-135 the chain carries Phosphoserine. 8 consecutive repeat copies span residues 165 to 179, 180 to 195, 196 to 211, 212 to 226, 227 to 240, 242 to 255, 256 to 271, and 272 to 288. Residues 165 to 288 form an 8 X approximate tandem repeats region; it reads AAVDRKESGK…EESKTKAPEK (124 aa). The tract at residues 503–522 is 5 X 4 AA approximate tandem repeats; that stretch reads SPKPSPQPSPKPAPKNSPKK. Pro residues-rich tracts occupy residues 505-517 and 527-538; these read KPSP…PAPK and AAPPPPPPPLAP. A Phosphoserine modification is found at Ser-550. A WH2 domain is found at 569-588; that stretch reads SRDQLLAAIRSSNLKQLKKV.

Belongs to the tropomodulin family. In terms of tissue distribution, detected in aorta, urinary bladder and uterus (at protein level). Detected in smooth muscle cells. Detected in aorta, bladder, colon, intestine, stomach and uterus.

It localises to the cytoplasm. The protein resides in the myofibril. It is found in the sarcomere. Its subcellular location is the cytoskeleton. Required for proper contractility of visceral smooth muscle cells. Mediates nucleation of actin filaments. The sequence is that of Leiomodin-1 (Lmod1) from Mus musculus (Mouse).